A 441-amino-acid chain; its full sequence is Transcriptional regulatory protein ZraR (441 aa).

The 115-residue stretch at 7 to 121 (DILVVDDDVS…RLQETLEKAL (115 aa)) folds into the Response regulatory domain. D56 is modified (4-aspartylphosphate). The Sigma-54 factor interaction domain occupies 141–370 (MIGSSPAMQH…LENAIERAVV (230 aa)). ATP is bound by residues G172, T173, R329, and R359. The segment at residues 421–440 (KTEAARQLGITRKTLLAKLS) is a DNA-binding region (H-T-H motif).

Forms homohexamers in the crystal structure. However, the dimerization interface between DNA-binding domains observed in the crystal structure suggests that dodecamers, rather than hexamers, might be the functionally important oligomer. Post-translationally, phosphorylated by ZraS.

The protein localises to the cytoplasm. Its activity is regulated as follows. Activity of the ZraS/ZraR two-component system is repressed by the zinc-bound form of ZraP, which probably interacts with the periplasmic region of ZraS. Part of the Zra signaling pathway, an envelope stress response (ESR) system composed of the periplasmic accessory protein ZraP, the histidine kinase ZraS and the transcriptional regulator ZraR. The ZraPSR system contributes to antibiotic resistance and is important for membrane integrity in the presence of membrane-targeting biocides. ZraR is a member of the two-component regulatory system ZraS/ZraR. When activated by ZraS, acts in conjunction with sigma-54 to regulate the expression of zraP in the presence of high Zn(2+) or Pb(2+) concentrations. Also positively autoregulates the expression of the zraSR operon. This is Transcriptional regulatory protein ZraR from Salmonella typhimurium (strain LT2 / SGSC1412 / ATCC 700720).